The sequence spans 222 residues: MTETSPPPVLDTAQARVLGCLIEKEATTPDAYPLTVNAAQVAANQKTAREPVLNLQTGVVHHALRQLETLGLVRQQFSSRAERYEHRLGSVLDLTRQQVALIGLLLLRGAQTLGELYARSERLARFNDADDMRHHLDRLIQRGLAAQLPRASGQREDRYAHLLSGELDVEALQAAAARAAPSARSGSDTSDLEARMQALEATVVELQEALAAVQARLDAAGA.

The protein belongs to the UPF0502 family.

The protein is UPF0502 protein XAC4278 of Xanthomonas axonopodis pv. citri (strain 306).